Consider the following 218-residue polypeptide: ATP phosphoribosyltransferase (218 aa).

Belongs to the ATP phosphoribosyltransferase family. Short subfamily. In terms of assembly, heteromultimer composed of HisG and HisZ subunits.

The protein localises to the cytoplasm. It carries out the reaction 1-(5-phospho-beta-D-ribosyl)-ATP + diphosphate = 5-phospho-alpha-D-ribose 1-diphosphate + ATP. Its pathway is amino-acid biosynthesis; L-histidine biosynthesis; L-histidine from 5-phospho-alpha-D-ribose 1-diphosphate: step 1/9. Catalyzes the condensation of ATP and 5-phosphoribose 1-diphosphate to form N'-(5'-phosphoribosyl)-ATP (PR-ATP). Has a crucial role in the pathway because the rate of histidine biosynthesis seems to be controlled primarily by regulation of HisG enzymatic activity. The protein is ATP phosphoribosyltransferase of Trichormus variabilis (strain ATCC 29413 / PCC 7937) (Anabaena variabilis).